Reading from the N-terminus, the 497-residue chain is NAD(P)H-quinone oxidoreductase chain 4, chloroplastic (497 aa).

14 helical membrane-spanning segments follow: residues 4 to 24 (FPWL…IFLF), 35 to 55 (YTVC…CYHF), 84 to 104 (GLSI…TLAA), 111 to 131 (CKLF…PFSS), 134 to 154 (ILLF…LLAM), 167 to 187 (FILY…GIGL), 208 to 228 (ALEI…SPII), 242 to 262 (HYST…YGLV), 274 to 294 (SIFC…AASA), 305 to 325 (IAYS…SISD), 330 to 350 (GAIL…FLSG), 386 to 406 (LALP…GIIT), 411 to 431 (FLIM…LTPI), and 463 to 483 (FISI…DFIF).

The protein belongs to the complex I subunit 4 family.

It is found in the plastid. Its subcellular location is the chloroplast thylakoid membrane. The catalysed reaction is a plastoquinone + NADH + (n+1) H(+)(in) = a plastoquinol + NAD(+) + n H(+)(out). It carries out the reaction a plastoquinone + NADPH + (n+1) H(+)(in) = a plastoquinol + NADP(+) + n H(+)(out). The protein is NAD(P)H-quinone oxidoreductase chain 4, chloroplastic (ndhD) of Lotus japonicus (Lotus corniculatus var. japonicus).